The chain runs to 440 residues: GTPase Der (440 aa).

EngA-type G domains follow at residues 4–168 (PIVA…NPED) and 177–352 (IKVA…NQNA). GTP contacts are provided by residues 10–17 (GRPNVGKS), 57–61 (DTGGI), 120–123 (NKVD), 183–190 (GKPNVGKS), 230–234 (DTAGI), and 295–298 (NKWD). The region spanning 353–437 (MRIPTGALNE…PIRFILREKT (85 aa)) is the KH-like domain.

It belongs to the TRAFAC class TrmE-Era-EngA-EngB-Septin-like GTPase superfamily. EngA (Der) GTPase family. In terms of assembly, associates with the 50S ribosomal subunit.

GTPase that plays an essential role in the late steps of ribosome biogenesis. The polypeptide is GTPase Der (Alkaliphilus oremlandii (strain OhILAs) (Clostridium oremlandii (strain OhILAs))).